We begin with the raw amino-acid sequence, 86 residues long: Large ribosomal subunit protein eL20 (86 aa).

Belongs to the eukaryotic ribosomal protein eL20 family. Part of the 50S ribosomal subunit. Binds 23S rRNA.

The sequence is that of Large ribosomal subunit protein eL20 from Metallosphaera sedula (strain ATCC 51363 / DSM 5348 / JCM 9185 / NBRC 15509 / TH2).